The primary structure comprises 770 residues: Probable capsid and replication-associated protein (770 aa).

Disordered regions lie at residues 645 to 682 (QRMQQQPTTTDIFSAGRKRPRRDTEVYHSSQEGEQKES) and 697 to 717 (WEDSQQEESGSQSSEEETQTV). A compositionally biased stretch (polar residues) spans 646 to 656 (RMQQQPTTTDI). Residues 666–681 (RDTEVYHSSQEGEQKE) show a composition bias toward basic and acidic residues. Residues 703–717 (EESGSQSSEEETQTV) are compositionally biased toward low complexity.

Belongs to the anelloviridae capsid protein family.

It localises to the virion. May self assemble to form an icosahedral capsid. Presumably essential to initiate and monitor viral genome replication by a rolling circle mechanism. This chain is Probable capsid and replication-associated protein, found in Homo sapiens (Human).